Here is a 784-residue protein sequence, read N- to C-terminus: MKVNKFFKKTTHVLLVAGLTIGLTAPFTGTTAQAAADTVPIQILGINDFHGALETASKDASGSPIGGADYLATNLDNATNSFLQANPGATTDNAIRVQAGDMVGASPAVSGLLQDEPTMKVLQKMNFEVGTLGNHEFDEGLPEYKRILDGVSTNKFGPIVEAYPRVKSDMKIVAANVVNKGTNTVAEGFLPYYVKEIDGVKVGFIGIVTTEIPNLVLANHIKDYDFLDEAETIVKYSAELRGQGVNAIVVLSHVPALSTGNPNTGTKQDVAGEAANMMTKANELDPNNSVDLVLAGHNHQYTNGLVGKTRIVQSYNNGKAFSDVTGELDKTTGDFVSPPDAKITYNTRSVTPNADITAVTEDAKSRIEGVINETIGLANKDVISRDTNPDNKAIDDKESELGNMITDAQRYMANKAGADVDFAMTNNGGIRSDLTTRLANGQNEITWGAAQAVQPFGNILQVVEMTGADILEALNQQYLSNQTYFLQISGLKYTFTDTDDLDHAYKVASVTTEDGTPLKTDQKYKVVINDFLFGGGDGFSAFKKANLVTAIDPDTETFINYIKDQKAAGKVITAQKEGRKVYKSQAEIDKETKDAAIKAIKEATKINKLAEKDKTLTGTTLPGATVSVQKATANARMALAAGPNATADANGKFSVDVTSLNLKKGDQITTTITDPNGYSTTFQATVQAAATTPPDNGNGGTDNGNGNGNNGGTDGNGGTNNGNGSGTNGGTTTTEDPTTTTSNTSTTGTSSNTSLPTTGDTAGLATVFGVILTTTALYVLRKRS.

The signal sequence occupies residues 1-34 (MKVNKFFKKTTHVLLVAGLTIGLTAPFTGTTAQA). The interval 690-761 (ATTPPDNGNG…NTSLPTTGDT (72 aa)) is disordered. Gly residues predominate over residues 697-729 (GNGGTDNGNGNGNNGGTDGNGGTNNGNGSGTNG). Residues 730–759 (GTTTTEDPTTTTSNTSTTGTSSNTSLPTTG) are compositionally biased toward low complexity. The LPXTG sorting signal motif lies at 755-759 (LPTTG). Thr-758 is modified (pentaglycyl murein peptidoglycan amidated threonine). Positions 759-784 (GDTAGLATVFGVILTTTALYVLRKRS) are cleaved as a propeptide — removed by sortase A.

The protein localises to the secreted. Its subcellular location is the cell wall. The chain is Cell wall protein Lmo0130 from Listeria monocytogenes serovar 1/2a (strain ATCC BAA-679 / EGD-e).